Consider the following 120-residue polypeptide: Large ribosomal subunit protein bL20 (120 aa).

The protein belongs to the bacterial ribosomal protein bL20 family.

Binds directly to 23S ribosomal RNA and is necessary for the in vitro assembly process of the 50S ribosomal subunit. It is not involved in the protein synthesizing functions of that subunit. The protein is Large ribosomal subunit protein bL20 of Ureaplasma urealyticum serovar 10 (strain ATCC 33699 / Western).